A 424-amino-acid chain; its full sequence is UDP-N-acetylglucosamine 1-carboxyvinyltransferase (424 aa).

Residue 22-23 (KN) coordinates phosphoenolpyruvate. Residue Arg-93 coordinates UDP-N-acetyl-alpha-D-glucosamine. Catalysis depends on Cys-117, which acts as the Proton donor. At Cys-117 the chain carries 2-(S-cysteinyl)pyruvic acid O-phosphothioketal. Residues 122 to 126 (RPVDL), 162 to 165 (KVSV), Asp-307, and Ile-329 contribute to the UDP-N-acetyl-alpha-D-glucosamine site.

This sequence belongs to the EPSP synthase family. MurA subfamily.

The protein resides in the cytoplasm. The catalysed reaction is phosphoenolpyruvate + UDP-N-acetyl-alpha-D-glucosamine = UDP-N-acetyl-3-O-(1-carboxyvinyl)-alpha-D-glucosamine + phosphate. It functions in the pathway cell wall biogenesis; peptidoglycan biosynthesis. Cell wall formation. Adds enolpyruvyl to UDP-N-acetylglucosamine. The sequence is that of UDP-N-acetylglucosamine 1-carboxyvinyltransferase from Haemophilus influenzae (strain PittEE).